The following is a 283-amino-acid chain: Phosphatidylserine decarboxylase proenzyme (283 aa).

Residues Asp-89, His-146, and Ser-249 each act as charge relay system; for autoendoproteolytic cleavage activity in the active site. Ser-249 functions as the Schiff-base intermediate with substrate; via pyruvic acid; for decarboxylase activity in the catalytic mechanism. The residue at position 249 (Ser-249) is a Pyruvic acid (Ser); by autocatalysis.

Belongs to the phosphatidylserine decarboxylase family. PSD-B subfamily. Prokaryotic type I sub-subfamily. Heterodimer of a large membrane-associated beta subunit and a small pyruvoyl-containing alpha subunit. It depends on pyruvate as a cofactor. Post-translationally, is synthesized initially as an inactive proenzyme. Formation of the active enzyme involves a self-maturation process in which the active site pyruvoyl group is generated from an internal serine residue via an autocatalytic post-translational modification. Two non-identical subunits are generated from the proenzyme in this reaction, and the pyruvate is formed at the N-terminus of the alpha chain, which is derived from the carboxyl end of the proenzyme. The autoendoproteolytic cleavage occurs by a canonical serine protease mechanism, in which the side chain hydroxyl group of the serine supplies its oxygen atom to form the C-terminus of the beta chain, while the remainder of the serine residue undergoes an oxidative deamination to produce ammonia and the pyruvoyl prosthetic group on the alpha chain. During this reaction, the Ser that is part of the protease active site of the proenzyme becomes the pyruvoyl prosthetic group, which constitutes an essential element of the active site of the mature decarboxylase.

The protein localises to the cell membrane. The catalysed reaction is a 1,2-diacyl-sn-glycero-3-phospho-L-serine + H(+) = a 1,2-diacyl-sn-glycero-3-phosphoethanolamine + CO2. Its pathway is phospholipid metabolism; phosphatidylethanolamine biosynthesis; phosphatidylethanolamine from CDP-diacylglycerol: step 2/2. Its function is as follows. Catalyzes the formation of phosphatidylethanolamine (PtdEtn) from phosphatidylserine (PtdSer). This Legionella pneumophila subsp. pneumophila (strain Philadelphia 1 / ATCC 33152 / DSM 7513) protein is Phosphatidylserine decarboxylase proenzyme.